We begin with the raw amino-acid sequence, 160 residues long: Cytochrome b6-f complex subunit 4 (160 aa).

The next 3 helical transmembrane spans lie at 36 to 56 (LLYI…GLAV), 95 to 115 (LLGI…PFIE), and 128 to 148 (IAMS…IGAC).

It belongs to the cytochrome b family. PetD subfamily. The 4 large subunits of the cytochrome b6-f complex are cytochrome b6, subunit IV (17 kDa polypeptide, PetD), cytochrome f and the Rieske protein, while the 4 small subunits are PetG, PetL, PetM and PetN. The complex functions as a dimer.

It is found in the cellular thylakoid membrane. Component of the cytochrome b6-f complex, which mediates electron transfer between photosystem II (PSII) and photosystem I (PSI), cyclic electron flow around PSI, and state transitions. This is Cytochrome b6-f complex subunit 4 from Prochlorococcus marinus (strain MIT 9312).